The chain runs to 431 residues: Histidine--tRNA ligase (431 aa).

The protein belongs to the class-II aminoacyl-tRNA synthetase family.

It localises to the cytoplasm. The enzyme catalyses tRNA(His) + L-histidine + ATP = L-histidyl-tRNA(His) + AMP + diphosphate + H(+). This Pyrococcus horikoshii (strain ATCC 700860 / DSM 12428 / JCM 9974 / NBRC 100139 / OT-3) protein is Histidine--tRNA ligase (hisS).